Consider the following 225-residue polypeptide: Thaumatin-like protein (225 aa).

The N-terminal stretch at M1–G24 is a signal peptide. 8 disulfide bridges follow: C33–C224, C74–C84, C89–C95, C140–C213, C146–C196, C154–C164, C168–C177, and C178–C183. A glycan (N-linked (GlcNAc...) asparagine) is linked at N187.

Belongs to the thaumatin family. N-glycosylated. Woody stem plug.

The protein localises to the secreted. Functionally, has antifungal activity. The polypeptide is Thaumatin-like protein (tlp) (Actinidia deliciosa (Kiwi)).